The following is a 562-amino-acid chain: Cell division protein FtsZ (562 aa).

GTP-binding positions include 23 to 27 (GAGGN), 110 to 112 (GTG), glutamate 141, arginine 145, and aspartate 189. A compositionally biased stretch (low complexity) spans 404–413 (PAAARPAQQP). 2 disordered regions span residues 404 to 428 (PAAARPAQQPMAETFRPDPQLRLDP) and 462 to 562 (ETAQ…RQAN). A compositionally biased stretch (basic and acidic residues) spans 418 to 428 (FRPDPQLRLDP). Low complexity-rich tracts occupy residues 464–486 (AQAAPQPQRQPEIQRQQAPQPQR) and 500–510 (GLLRRPAAAQP).

Belongs to the FtsZ family. As to quaternary structure, homodimer. Polymerizes to form a dynamic ring structure in a strictly GTP-dependent manner. Interacts directly with several other division proteins. Interacts with FtsZ-like protein (also called FtsZm).

It localises to the cytoplasm. Its function is as follows. Essential cell division protein that forms a contractile ring structure (Z ring) at the future cell division site. The regulation of the ring assembly controls the timing and the location of cell division. One of the functions of the FtsZ ring is to recruit other cell division proteins to the septum to produce a new cell wall between the dividing cells. Binds GTP and shows GTPase activity. Mild overexpression impairs cell division, leading to very elongated cells. Isolated protein forms filaments and bundles in the presence of GTP. This is Cell division protein FtsZ from Magnetospirillum gryphiswaldense (strain DSM 6361 / JCM 21280 / NBRC 15271 / MSR-1).